Here is a 250-residue protein sequence, read N- to C-terminus: Ribosomal RNA small subunit methyltransferase J (250 aa).

Residues 96-97 and Asp-168 each bind S-adenosyl-L-methionine; that span reads RD.

Belongs to the methyltransferase superfamily. RsmJ family.

It localises to the cytoplasm. It catalyses the reaction guanosine(1516) in 16S rRNA + S-adenosyl-L-methionine = N(2)-methylguanosine(1516) in 16S rRNA + S-adenosyl-L-homocysteine + H(+). In terms of biological role, specifically methylates the guanosine in position 1516 of 16S rRNA. The chain is Ribosomal RNA small subunit methyltransferase J from Neisseria gonorrhoeae (strain ATCC 700825 / FA 1090).